The chain runs to 213 residues: FMN-dependent NADH:quinone oxidoreductase 1 (213 aa).

Residue 18 to 20 (SVS) participates in FMN binding.

The protein belongs to the azoreductase type 1 family. As to quaternary structure, homodimer. FMN serves as cofactor.

It catalyses the reaction 2 a quinone + NADH + H(+) = 2 a 1,4-benzosemiquinone + NAD(+). The catalysed reaction is N,N-dimethyl-1,4-phenylenediamine + anthranilate + 2 NAD(+) = 2-(4-dimethylaminophenyl)diazenylbenzoate + 2 NADH + 2 H(+). Quinone reductase that provides resistance to thiol-specific stress caused by electrophilic quinones. Its function is as follows. Also exhibits azoreductase activity. Catalyzes the reductive cleavage of the azo bond in aromatic azo compounds to the corresponding amines. In Bacillus cereus (strain ATCC 10987 / NRS 248), this protein is FMN-dependent NADH:quinone oxidoreductase 1.